Here is a 284-residue protein sequence, read N- to C-terminus: tRNA uridine(34) hydroxylase (284 aa).

Residues 132–226 form the Rhodanese domain; sequence TGRPVVMLDT…YFEEVGGAHY (95 aa). Cys-186 (cysteine persulfide intermediate) is an active-site residue.

This sequence belongs to the TrhO family.

It catalyses the reaction uridine(34) in tRNA + AH2 + O2 = 5-hydroxyuridine(34) in tRNA + A + H2O. Its function is as follows. Catalyzes oxygen-dependent 5-hydroxyuridine (ho5U) modification at position 34 in tRNAs. This chain is tRNA uridine(34) hydroxylase, found in Burkholderia cenocepacia (strain ATCC BAA-245 / DSM 16553 / LMG 16656 / NCTC 13227 / J2315 / CF5610) (Burkholderia cepacia (strain J2315)).